The following is a 165-amino-acid chain: Putative 4-hydroxy-4-methyl-2-oxoglutarate aldolase (165 aa).

Residues 80 to 83 (GGNL) and Arg102 contribute to the substrate site. Asp103 is a binding site for a divalent metal cation.

Belongs to the class II aldolase/RraA-like family. In terms of assembly, homotrimer. Requires a divalent metal cation as cofactor.

It catalyses the reaction 4-hydroxy-4-methyl-2-oxoglutarate = 2 pyruvate. The enzyme catalyses oxaloacetate + H(+) = pyruvate + CO2. Its function is as follows. Catalyzes the aldol cleavage of 4-hydroxy-4-methyl-2-oxoglutarate (HMG) into 2 molecules of pyruvate. Also contains a secondary oxaloacetate (OAA) decarboxylase activity due to the common pyruvate enolate transition state formed following C-C bond cleavage in the retro-aldol and decarboxylation reactions. The polypeptide is Putative 4-hydroxy-4-methyl-2-oxoglutarate aldolase (Burkholderia mallei (strain NCTC 10247)).